We begin with the raw amino-acid sequence, 840 residues long: Serotype-specific mannosyltransferase WbdA (840 aa).

An alpha-(1-&gt;2)-mannosyltransferase region spans residues 2–399; the sequence is HILIDVQGYQ…WANTAHLAIE (398 aa). Residues 456-829 are alpha-(1-&gt;3)-mannosyltransferase; the sequence is KLLVDISVLA…WKQSAEFLLK (374 aa).

The protein belongs to the glycosyltransferase group 1 family. Glycosyltransferase 4 subfamily. As to quaternary structure, monomer. Interacts with the C-terminal region of WbdD. Interacts with WbdD via a surface-exposed alpha-helix in the C-terminal mannosyltransferase domain. However, the C-terminal domain is unable to interact with WbdD in the absence of its N-terminal partner.

The protein localises to the cell inner membrane. The catalysed reaction is [alpha-D-Man-(1-&gt;3)-alpha-D-Man-(1-&gt;3)-alpha-D-Man-(1-&gt;2)-alpha-D-Man-(1-&gt;2)](n)-alpha-D-Man-(1-&gt;3)-alpha-D-Man-(1-&gt;3)-alpha-D-Man-(1-&gt;3)-alpha-D-GlcNAc-di-trans,octa-cis-undecaprenyl diphosphate + 2 GDP-alpha-D-mannose = alpha-D-Man-(1-&gt;2)-alpha-D-Man-(1-&gt;2)-[alpha-D-Man-(1-&gt;3)-alpha-D-Man-(1-&gt;3)-alpha-D-Man-(1-&gt;2)-alpha-D-Man-(1-&gt;2)](n)-alpha-D-Man-(1-&gt;3)-alpha-D-Man-(1-&gt;3)-alpha-D-Man-(1-&gt;3)-alpha-D-GlcNAc-di-trans,octa-cis-undecaprenyl diphosphate + 2 GDP + 2 H(+). The enzyme catalyses alpha-D-Man-(1-&gt;2)-alpha-D-Man-(1-&gt;2)-[alpha-D-Man-(1-&gt;3)-alpha-D-Man-(1-&gt;3)-alpha-D-Man-(1-&gt;2)-alpha-D-Man-(1-&gt;2)](n)-alpha-D-Man-(1-&gt;3)-alpha-D-Man-(1-&gt;3)-alpha-D-Man-(1-&gt;3)-alpha-D-GlcNAc-di-trans,octa-cis-undecaprenyl diphosphate + 2 GDP-alpha-D-mannose = [alpha-D-Man-(1-&gt;3)-alpha-D-Man-(1-&gt;3)-alpha-D-Man-(1-&gt;2)-alpha-D-Man-(1-&gt;2)](n+1)-alpha-D-Man-(1-&gt;3)-alpha-D-Man-(1-&gt;3)-alpha-D-Man-(1-&gt;3)-alpha-D-GlcNAc-di-trans,octa-cis-undecaprenyl diphosphate + 2 GDP + 2 H(+). It functions in the pathway bacterial outer membrane biogenesis; LPS O-antigen biosynthesis. Its activity is regulated as follows. The alpha-(1-&gt;2)-mannosyltransferase activity of the N-terminal domain is regulated by the activity of the C-terminal alpha-(1-&gt;3)-mannosyltransferase. The relative concentration of WbdA and WbdD is critical in determining the O polysaccharide (OPS) modal chain length. OPS chain length increases with increasing concentration of WbdA, but the maximum length does not increase beyond the wild-type modal length, despite substantial increases in WbdA concentration. Its function is as follows. Mannosyltransferase involved in the biosynthesis of the repeat unit of the lipopolysaccharide (LPS) O-antigen region. Catalyzes the polymerization of a tetrasaccharide repeat unit containing two alpha-(1-&gt;3)- and two alpha-(1-&gt;2)-linked mannopyranose residues. Extension is terminated by the action of the chain terminator bifunctional methyltransferase/kinase WbdD. This Escherichia coli protein is Serotype-specific mannosyltransferase WbdA.